An 855-amino-acid polypeptide reads, in one-letter code: tRNA(Met) cytidine acetyltransferase TmcA (855 aa).

ATP-binding positions include glutamine 260, 286-295 (GRGKSALLGI), and arginine 438. In terms of domain architecture, N-acetyltransferase spans 480 to 663 (PDLRYWFEDP…GEYSVAVIRP (184 aa)). Acetyl-CoA-binding positions include 590 to 592 (IAT), 597 to 603 (MRHGLGS), glutamate 630, and arginine 637.

This sequence belongs to the RNA cytidine acetyltransferase family. TmcA subfamily.

It is found in the cytoplasm. It catalyses the reaction cytidine(34) in elongator tRNA(Met) + acetyl-CoA + ATP + H2O = N(4)-acetylcytidine(34) in elongator tRNA(Met) + ADP + phosphate + CoA + H(+). Functionally, catalyzes the formation of N(4)-acetylcytidine (ac(4)C) at the wobble position of tRNA(Met), by using acetyl-CoA as an acetyl donor and ATP (or GTP). This Methanopyrus kandleri (strain AV19 / DSM 6324 / JCM 9639 / NBRC 100938) protein is tRNA(Met) cytidine acetyltransferase TmcA.